The following is a 427-amino-acid chain: 5-hydroxybenzimidazole synthase BzaB (427 aa).

The protein belongs to the ThiC family. 5-hydroxybenzimidazole synthase subfamily. [4Fe-4S] cluster is required as a cofactor.

The catalysed reaction is 5-amino-1-(5-phospho-beta-D-ribosyl)imidazole + AH2 + S-adenosyl-L-methionine = 5-hydroxybenzimidazole + 5'-deoxyadenosine + formate + L-methionine + A + NH4(+) + phosphate + 2 H(+). The protein operates within cofactor biosynthesis; adenosylcobalamin biosynthesis. In terms of biological role, together with BzaA, catalyzes the conversion of aminoimidazole ribotide (AIR) to 5-hydroxybenzimidazole (5-HBI) in a radical S-adenosyl-L-methionine (SAM)-dependent reaction. Is thus involved in the anaerobic biosynthesis of dimethylbenzimidazole (DMB), the lower axial ligand of vitamin B12 (cobalamin). Requires BzaA for catalytic activity, as BzaB alone displays no activity. In Eubacterium limosum, this protein is 5-hydroxybenzimidazole synthase BzaB.